A 981-amino-acid polypeptide reads, in one-letter code: DNA ligase 4 (981 aa).

9 residues coordinate ATP: Glu-320, Lys-322, Arg-327, Glu-380, Phe-424, Glu-484, Lys-489, Lys-506, and Lys-508. Lys-322 acts as the N6-AMP-lysine intermediate in catalysis. Position 380 (Glu-380) interacts with Mg(2+). Glu-484 is a Mg(2+) binding site. The tract at residues 544–563 (SEKNNPSSYESGSDSDSDSE) is disordered. 2 consecutive BRCT domains span residues 721-819 (SKAD…PKYV) and 875-980 (ERLL…EYAA).

The protein belongs to the ATP-dependent DNA ligase family. Mg(2+) serves as cofactor.

It localises to the nucleus. The enzyme catalyses ATP + (deoxyribonucleotide)n-3'-hydroxyl + 5'-phospho-(deoxyribonucleotide)m = (deoxyribonucleotide)n+m + AMP + diphosphate.. Its function is as follows. DNA ligase involved in DNA non-homologous end joining (NHEJ); required for double-strand break (DSB) repair. The polypeptide is DNA ligase 4 (LIG4) (Eremothecium gossypii (strain ATCC 10895 / CBS 109.51 / FGSC 9923 / NRRL Y-1056) (Yeast)).